The sequence spans 91 residues: Putative ribonuclease inhibitor YrdF (91 aa).

Belongs to the barstar family.

The protein localises to the cytoplasm. The chain is Putative ribonuclease inhibitor YrdF (yrdF) from Bacillus subtilis (strain 168).